Consider the following 372-residue polypeptide: Aminomethyltransferase (372 aa).

The protein belongs to the GcvT family. As to quaternary structure, the glycine cleavage system is composed of four proteins: P, T, L and H.

The catalysed reaction is N(6)-[(R)-S(8)-aminomethyldihydrolipoyl]-L-lysyl-[protein] + (6S)-5,6,7,8-tetrahydrofolate = N(6)-[(R)-dihydrolipoyl]-L-lysyl-[protein] + (6R)-5,10-methylene-5,6,7,8-tetrahydrofolate + NH4(+). Its function is as follows. The glycine cleavage system catalyzes the degradation of glycine. In Burkholderia orbicola (strain MC0-3), this protein is Aminomethyltransferase.